A 41-amino-acid polypeptide reads, in one-letter code: Large ribosomal subunit protein bL36 (41 aa).

This sequence belongs to the bacterial ribosomal protein bL36 family.

The polypeptide is Large ribosomal subunit protein bL36 (Ruegeria pomeroyi (strain ATCC 700808 / DSM 15171 / DSS-3) (Silicibacter pomeroyi)).